Here is a 197-residue protein sequence, read N- to C-terminus: Translation machinery-associated protein 22 (197 aa).

The SUI1 domain occupies 103–174 (IRIKRVERNK…DVREFLIKNY (72 aa)).

This sequence belongs to the DENR family. As to quaternary structure, interacts with the 40S ribosomal subunit.

The protein localises to the cytoplasm. The polypeptide is Translation machinery-associated protein 22 (tma22) (Botryotinia fuckeliana (strain B05.10) (Noble rot fungus)).